Here is a 149-residue protein sequence, read N- to C-terminus: Putative inactive group IIC secretory phospholipase A2 (149 aa).

The first 18 residues, 1 to 18 (MKVIAILTLLLFCSPTHS), serve as a signal peptide directing secretion. Cystine bridges form between C44–C142, C77–C107, C95–C112, and C97–C105. The Ca(2+) site is built by Y45, G47, and G49.

The protein belongs to the phospholipase A2 family. The cofactor is Ca(2+).

The protein resides in the secreted. Functionally, inactive phospholipase. The polypeptide is Putative inactive group IIC secretory phospholipase A2 (PLA2G2C) (Homo sapiens (Human)).